Reading from the N-terminus, the 877-residue chain is DNA polymerase I (877 aa).

Residues 180–272 (TPSQFIDLKA…GLEDTLLKEK (93 aa)) enclose the 5'-3' exonuclease domain. In terms of domain architecture, 3'-5' exonuclease spans 312–468 (FEIVTDKSSV…AKEKMMAELI (157 aa)).

Belongs to the DNA polymerase type-A family. As to quaternary structure, single-chain monomer with multiple functions.

The enzyme catalyses DNA(n) + a 2'-deoxyribonucleoside 5'-triphosphate = DNA(n+1) + diphosphate. Its function is as follows. In addition to polymerase activity, this DNA polymerase exhibits 3'-5' and 5'-3' exonuclease activity. The chain is DNA polymerase I (polA) from Lactococcus lactis subsp. cremoris (strain MG1363).